A 1534-amino-acid polypeptide reads, in one-letter code: DNA polymerase alpha catalytic subunit (1534 aa).

The segment covering 1–12 has biased composition (low complexity); that stretch reads MDEGSADAGASG. 3 disordered regions span residues 1–23, 96–141, and 864–905; these read MDEGSADAGASGRRSRARGSEAV, THRT…LSAA, and FNST…GPSY. The segment covering 116–125 has biased composition (basic residues); sequence RKRKQPRPQS. A compositionally biased stretch (low complexity) spans 127 to 141; the sequence is RPPQQSAAAASLSAA. 2 stretches are compositionally biased toward basic and acidic residues: residues 864–882 and 889–898; these read FNSTKRKMNPDTEAARPDE and DEGHHVDQGK. Residues C1340, C1343, C1383, C1386, C1422, C1427, C1448, and C1454 each contribute to the Zn(2+) site. The CysA-type zinc-finger motif lies at 1340–1386; that stretch reads CPSCSTTFDCPPVSSLIIGSSSGNVSNPNEGNDASINFWRRMRCPRC. The CysB motif signature appears at 1422–1451; that stretch reads CDDEGCKYSTHSVNLRVMGDSERGTICPNY.

Belongs to the DNA polymerase type-B family.

The protein localises to the nucleus. It catalyses the reaction DNA(n) + a 2'-deoxyribonucleoside 5'-triphosphate = DNA(n+1) + diphosphate. Polymerase alpha in a complex with DNA primase is a replicative polymerase. The sequence is that of DNA polymerase alpha catalytic subunit from Oryza sativa subsp. japonica (Rice).